A 256-amino-acid polypeptide reads, in one-letter code: Doublecortin domain-containing protein (256 aa).

Residues 71–103 (NVFERLTDTAYYTGSHRERFDEFGNGRGIAGRE) form a partial p25alpha domain region. One can recognise a Doublecortin domain in the interval 152–226 (RLMWLYRNGD…AKYLCTSGEP (75 aa)).

The protein localises to the cytoplasm. The protein resides in the cytoskeleton. Specifically required in the formation and maintenance of the conoid fibers; the conoid is a component of the cytoskeletal apical complex, which is composed of a left-handed spiral of 14 fibers made from a nontubular tubulin polymer. Promotes the organization, curvature, and stability of the conoid fibers, and probably bridges other conoid components to the tubulin core. In Toxoplasma gondii (strain ATCC 50861 / VEG), this protein is Doublecortin domain-containing protein.